Here is a 229-residue protein sequence, read N- to C-terminus: 7-cyano-7-deazaguanine synthase (229 aa).

An ATP-binding site is contributed by Leu-15–Val-25. The Zn(2+) site is built by Cys-194, Cys-204, Cys-207, and Cys-210.

The protein belongs to the QueC family. It depends on Zn(2+) as a cofactor.

The enzyme catalyses 7-carboxy-7-deazaguanine + NH4(+) + ATP = 7-cyano-7-deazaguanine + ADP + phosphate + H2O + H(+). The protein operates within purine metabolism; 7-cyano-7-deazaguanine biosynthesis. Functionally, catalyzes the ATP-dependent conversion of 7-carboxy-7-deazaguanine (CDG) to 7-cyano-7-deazaguanine (preQ(0)). The chain is 7-cyano-7-deazaguanine synthase from Pseudomonas syringae pv. syringae (strain B728a).